Reading from the N-terminus, the 462-residue chain is A-type ATP synthase subunit B (462 aa).

This sequence belongs to the ATPase alpha/beta chains family. As to quaternary structure, has multiple subunits with at least A(3), B(3), C, D, E, F, H, I and proteolipid K(x).

It localises to the cell membrane. Its function is as follows. Component of the A-type ATP synthase that produces ATP from ADP in the presence of a proton gradient across the membrane. The B chain is a regulatory subunit. This is A-type ATP synthase subunit B from Pyrococcus furiosus (strain ATCC 43587 / DSM 3638 / JCM 8422 / Vc1).